A 164-amino-acid polypeptide reads, in one-letter code: Phosphopantetheine adenylyltransferase (164 aa).

Residue Ser9 participates in substrate binding. Residues 9–10 and His17 contribute to the ATP site; that span reads SF. 3 residues coordinate substrate: Lys41, Val78, and Arg92. ATP contacts are provided by residues 93 to 95, Glu103, and 128 to 134; these read GLR and SRPITAT.

The protein belongs to the bacterial CoaD family. In terms of assembly, homohexamer. It depends on Mg(2+) as a cofactor.

Its subcellular location is the cytoplasm. The enzyme catalyses (R)-4'-phosphopantetheine + ATP + H(+) = 3'-dephospho-CoA + diphosphate. It participates in cofactor biosynthesis; coenzyme A biosynthesis; CoA from (R)-pantothenate: step 4/5. Reversibly transfers an adenylyl group from ATP to 4'-phosphopantetheine, yielding dephospho-CoA (dPCoA) and pyrophosphate. The sequence is that of Phosphopantetheine adenylyltransferase from Rhizobium leguminosarum bv. trifolii (strain WSM2304).